The following is a 267-amino-acid chain: Integral membrane protein 2C (267 aa).

T37 carries the phosphothreonine modification. A helical; Signal-anchor for type II membrane protein transmembrane segment spans residues 55-75 (VGGVCYLSMGMVVLLMGLVFA). One can recognise a BRICHOS domain in the interval 136–230 (FGGGDPADII…LCNGKDTYRL (95 aa)). A disulfide bridge connects residues C163 and C222. Residue N169 is glycosylated (N-linked (GlcNAc...) asparagine).

The protein belongs to the ITM2 family. In terms of assembly, interacts with BACE1. Interacts with APP. Interacts with STMN2. In terms of processing, type I membrane-bound, as well as soluble, furin has a pre-eminent role in ITM2C proteolytic processing. PCSK7 and PCSK5 may also be involved although to a lesser extent. The soluble form of PCSK7 is incapable of processing ITM2C. Fails to undergo shedding by ADAM10 and intramembrane cleavage by SPPL2B.

The protein resides in the lysosome membrane. The protein localises to the cell membrane. Negative regulator of amyloid-beta peptide production. May inhibit the processing of APP by blocking its access to alpha- and beta-secretase. Binding to the beta-secretase-cleaved APP C-terminal fragment is negligible, suggesting that ITM2C is a poor gamma-secretase cleavage inhibitor. May play a role in TNF-induced cell death and neuronal differentiation. The polypeptide is Integral membrane protein 2C (ITM2C) (Macaca fascicularis (Crab-eating macaque)).